A 106-amino-acid polypeptide reads, in one-letter code: Guanylate cyclase activator 2B (106 aa).

Residues 1 to 21 form the signal peptide; that stretch reads MSRSQLWAAVVLLLLLQSAQG. Positions 22–91 are excised as a propeptide; it reads VYIKYHGFQV…STFKALRTIA (70 aa). Intrachain disulfides connect Cys62–Cys75, Cys95–Cys103, and Cys98–Cys106.

The protein belongs to the guanylin family. As to expression, localized predominantly in intestinal villi and the corticomedullary junction of the kidney.

It localises to the secreted. Functionally, endogenous activator of intestinal guanylate cyclase. It stimulates this enzyme through the same receptor binding region as the heat-stable enterotoxins. May be a potent physiological regulator of intestinal fluid and electrolyte transport. May be an autocrine/paracrine regulator of intestinal salt and water transport. The polypeptide is Guanylate cyclase activator 2B (Guca2b) (Mus musculus (Mouse)).